The chain runs to 138 residues: Ribosome maturation factor RimP (138 aa).

It belongs to the RimP family.

Its subcellular location is the cytoplasm. In terms of biological role, required for maturation of 30S ribosomal subunits. The protein is Ribosome maturation factor RimP of Campylobacter concisus (strain 13826).